A 583-amino-acid polypeptide reads, in one-letter code: Pentatricopeptide repeat-containing protein At2g33760 (583 aa).

PPR repeat units lie at residues 71–105 (DDFLFNSVIKSTSKLRLPLHCVAYYRRMLSSNVSP), 106–140 (SNYTFTSVIKSCADLSALRIGKGVHCHAVVSGFGL), 141–171 (DTYVQAALVTFYSKCGDMEGARQVFDRMPEK), 172–206 (SIVAWNSLVSGFEQNGLADEAIQVFYQMRESGFEP), 207–241 (DSATFVSLLSACAQTGAVSLGSWVHQYIISEGLDL), 242–276 (NVKLGTALINLYSRCGDVGKAREVFDKMKETNVAA), 277–303 (WTAMISAYGTHGYGQQAVELFNKMEDD), 309–339 (NNVTFVAVLSACAHAGLVEEGRSVYKRMTKS), and 345–379 (GVEHHVCMVDMLGRAGFLDEAYKFIHQLDATGKAT). The type E motif stretch occupies residues 383-458 (LWTAMLGACK…QVGYSVIEVE (76 aa)). The interval 459–489 (NKTYMFSMGDESHQETGEIYRYLETLISRCK) is type E(+) motif. The interval 490–583 (EIGYAPVSEE…NGSCSCLDYW (94 aa)) is type DYW motif.

The protein belongs to the PPR family. PCMP-H subfamily.

This Arabidopsis thaliana (Mouse-ear cress) protein is Pentatricopeptide repeat-containing protein At2g33760 (PCMP-H6).